The following is an 810-amino-acid chain: Cell division control protein 48 homolog E (810 aa).

An N-acetylserine modification is found at S2. Residue S41 is modified to Phosphoserine. ATP is bound by residues 248-255 (GPPGSGKT) and 521-528 (GPPGCGKT).

This sequence belongs to the AAA ATPase family.

The protein localises to the nucleus. It localises to the cytoplasm. It is found in the cytoskeleton. The protein resides in the phragmoplast. Probably functions in cell division and growth processes. Interacts with certain SNAREs as part of specialized membrane fusion events where vesicles from the same organelle fuse (homotypic fusion). This chain is Cell division control protein 48 homolog E (CDC48E), found in Arabidopsis thaliana (Mouse-ear cress).